Here is a 454-residue protein sequence, read N- to C-terminus: MSPLHVVILAAGQGSRMKSSLPKVLHPVAGKAMLHHVVDTAKQLGAEKIHTVIGHGADQVRASLEDDSVNWVLQTEQLGTGHAVAQALPALPDDARVLVLYGDVPLTRKDTLETMVADLDERNLALLTVDMDNPHGYGRIVRNEQGLVQAIVEQKDATAEQQQIQEVNTGILAVSASHLKQWLPALSNSNAQGEYYLTDIIAMAVDHGLSVTVSQPLNPFEVQGVNNRLQLAELERWYQRQQAERLMTEGASLADPARIEVRGELTIGNDLWIDVNAVFEGRVSLGNNVVIGPNCVIKDATIADGAEIKANSVIEGAVVGANAQIGPFARLRPGTELAANTKIGNFVETKKAVVGEGSKINHLSYVGDASLGRNVNVGAGTITCNYDGVNKHQTVLGDGVFVGSNTSLVAPVNVAEQATIGAGSTITRDISKGELAVARGKQRNIAGWERPKKA.

Residues 1-228 (MSPLHVVILA…PFEVQGVNNR (228 aa)) are pyrophosphorylase. Residues 9–12 (LAAG), K23, Q74, 79–80 (GT), 101–103 (YGD), G138, E153, N168, and N226 each bind UDP-N-acetyl-alpha-D-glucosamine. Position 103 (D103) interacts with Mg(2+). N226 contributes to the Mg(2+) binding site. The interval 229–249 (LQLAELERWYQRQQAERLMTE) is linker. The tract at residues 250–454 (GASLADPARI…IAGWERPKKA (205 aa)) is N-acetyltransferase. UDP-N-acetyl-alpha-D-glucosamine contacts are provided by R332 and K350. H362 functions as the Proton acceptor in the catalytic mechanism. UDP-N-acetyl-alpha-D-glucosamine contacts are provided by Y365 and N376. Residues A379, 385–386 (NY), S404, A422, and R439 each bind acetyl-CoA.

It in the N-terminal section; belongs to the N-acetylglucosamine-1-phosphate uridyltransferase family. In the C-terminal section; belongs to the transferase hexapeptide repeat family. In terms of assembly, homotrimer. It depends on Mg(2+) as a cofactor.

Its subcellular location is the cytoplasm. The enzyme catalyses alpha-D-glucosamine 1-phosphate + acetyl-CoA = N-acetyl-alpha-D-glucosamine 1-phosphate + CoA + H(+). The catalysed reaction is N-acetyl-alpha-D-glucosamine 1-phosphate + UTP + H(+) = UDP-N-acetyl-alpha-D-glucosamine + diphosphate. The protein operates within nucleotide-sugar biosynthesis; UDP-N-acetyl-alpha-D-glucosamine biosynthesis; N-acetyl-alpha-D-glucosamine 1-phosphate from alpha-D-glucosamine 6-phosphate (route II): step 2/2. Its pathway is nucleotide-sugar biosynthesis; UDP-N-acetyl-alpha-D-glucosamine biosynthesis; UDP-N-acetyl-alpha-D-glucosamine from N-acetyl-alpha-D-glucosamine 1-phosphate: step 1/1. It functions in the pathway bacterial outer membrane biogenesis; LPS lipid A biosynthesis. Catalyzes the last two sequential reactions in the de novo biosynthetic pathway for UDP-N-acetylglucosamine (UDP-GlcNAc). The C-terminal domain catalyzes the transfer of acetyl group from acetyl coenzyme A to glucosamine-1-phosphate (GlcN-1-P) to produce N-acetylglucosamine-1-phosphate (GlcNAc-1-P), which is converted into UDP-GlcNAc by the transfer of uridine 5-monophosphate (from uridine 5-triphosphate), a reaction catalyzed by the N-terminal domain. This chain is Bifunctional protein GlmU, found in Marinobacter nauticus (strain ATCC 700491 / DSM 11845 / VT8) (Marinobacter aquaeolei).